The following is a 524-amino-acid chain: Glutamyl-tRNA(Gln) amidotransferase subunit A (524 aa).

Active-site charge relay system residues include Lys-109 and Ser-184. The Acyl-ester intermediate role is filled by Ser-208.

Belongs to the amidase family. GatA subfamily. In terms of assembly, heterotrimer of A, B and C subunits.

It catalyses the reaction L-glutamyl-tRNA(Gln) + L-glutamine + ATP + H2O = L-glutaminyl-tRNA(Gln) + L-glutamate + ADP + phosphate + H(+). Its function is as follows. Allows the formation of correctly charged Gln-tRNA(Gln) through the transamidation of misacylated Glu-tRNA(Gln) in organisms which lack glutaminyl-tRNA synthetase. The reaction takes place in the presence of glutamine and ATP through an activated gamma-phospho-Glu-tRNA(Gln). The chain is Glutamyl-tRNA(Gln) amidotransferase subunit A from Tropheryma whipplei (strain Twist) (Whipple's bacillus).